Reading from the N-terminus, the 516-residue chain is Cilia- and flagella-associated protein 53 (516 aa).

Coiled-coil stretches lie at residues 217–283 and 316–440; these read EEKK…LQVK and MQGY…RQMK. Basic and acidic residues-rich tracts occupy residues 417–436 and 461–472; these read KELL…DRNA and QAEREEEQREFE. Disordered stretches follow at residues 417–443 and 455–475; these read KELL…KVAQ and YQQS…EAGL.

It belongs to the CFAP53 family.

It is found in the cytoplasm. The protein localises to the cytoskeleton. The protein resides in the cilium axoneme. It localises to the microtubule organizing center. Its subcellular location is the centrosome. It is found in the centriolar satellite. In terms of biological role, microtubule inner protein (MIP) part of the dynein-decorated doublet microtubules (DMTs) in cilia axoneme, which is required for motile cilia beating. Regulates motility patterns of both 9+0 and 9+2 motile cilia through differential localization and recruitment of axonemal dynein components. Required for motile cilium formation and movement. Involved in the establishment of left-right symmetry during embryogenesis. This is Cilia- and flagella-associated protein 53 from Xenopus laevis (African clawed frog).